A 108-amino-acid polypeptide reads, in one-letter code: Large ribosomal subunit protein uL24 (108 aa).

It belongs to the universal ribosomal protein uL24 family. As to quaternary structure, part of the 50S ribosomal subunit.

One of two assembly initiator proteins, it binds directly to the 5'-end of the 23S rRNA, where it nucleates assembly of the 50S subunit. Its function is as follows. One of the proteins that surrounds the polypeptide exit tunnel on the outside of the subunit. This is Large ribosomal subunit protein uL24 from Geobacter metallireducens (strain ATCC 53774 / DSM 7210 / GS-15).